The primary structure comprises 236 residues: Adenosine 5'-phosphosulfate reductase (236 aa).

[4Fe-4S] cluster-binding residues include Cys-123, Cys-124, Cys-206, and Cys-209. Cys-232 acts as the Nucleophile; cysteine thiosulfonate intermediate in catalysis.

Belongs to the PAPS reductase family. CysH subfamily. [4Fe-4S] cluster serves as cofactor.

It localises to the cytoplasm. It carries out the reaction [thioredoxin]-disulfide + sulfite + AMP + 2 H(+) = adenosine 5'-phosphosulfate + [thioredoxin]-dithiol. The protein operates within sulfur metabolism; hydrogen sulfide biosynthesis; sulfite from sulfate. Its function is as follows. Catalyzes the formation of sulfite from adenosine 5'-phosphosulfate (APS) using thioredoxin as an electron donor. The protein is Adenosine 5'-phosphosulfate reductase of Streptomyces coelicolor (strain ATCC BAA-471 / A3(2) / M145).